We begin with the raw amino-acid sequence, 388 residues long: Succinate--CoA ligase [ADP-forming] subunit beta (388 aa).

An ATP-grasp domain is found at 9–244; the sequence is KALFAEYGLP…PSQDDAREAH (236 aa). Residues Lys-46, 53-55, Glu-99, Thr-102, and Glu-107 contribute to the ATP site; that span reads GRG. Residues Asn-199 and Asp-213 each coordinate Mg(2+). Substrate-binding positions include Asn-264 and 321–323; that span reads GIV.

Belongs to the succinate/malate CoA ligase beta subunit family. In terms of assembly, heterotetramer of two alpha and two beta subunits. Mg(2+) is required as a cofactor.

The catalysed reaction is succinate + ATP + CoA = succinyl-CoA + ADP + phosphate. It catalyses the reaction GTP + succinate + CoA = succinyl-CoA + GDP + phosphate. It participates in carbohydrate metabolism; tricarboxylic acid cycle; succinate from succinyl-CoA (ligase route): step 1/1. Functionally, succinyl-CoA synthetase functions in the citric acid cycle (TCA), coupling the hydrolysis of succinyl-CoA to the synthesis of either ATP or GTP and thus represents the only step of substrate-level phosphorylation in the TCA. The beta subunit provides nucleotide specificity of the enzyme and binds the substrate succinate, while the binding sites for coenzyme A and phosphate are found in the alpha subunit. This is Succinate--CoA ligase [ADP-forming] subunit beta from Shewanella sediminis (strain HAW-EB3).